Consider the following 596-residue polypeptide: Elongation factor 4 (596 aa).

One can recognise a tr-type G domain in the interval Lys2–Glu184. Residues Asp14–Thr19 and Asn131–Asp134 each bind GTP.

The protein belongs to the TRAFAC class translation factor GTPase superfamily. Classic translation factor GTPase family. LepA subfamily.

The protein localises to the cell inner membrane. It catalyses the reaction GTP + H2O = GDP + phosphate + H(+). In terms of biological role, required for accurate and efficient protein synthesis under certain stress conditions. May act as a fidelity factor of the translation reaction, by catalyzing a one-codon backward translocation of tRNAs on improperly translocated ribosomes. Back-translocation proceeds from a post-translocation (POST) complex to a pre-translocation (PRE) complex, thus giving elongation factor G a second chance to translocate the tRNAs correctly. Binds to ribosomes in a GTP-dependent manner. The chain is Elongation factor 4 from Shewanella woodyi (strain ATCC 51908 / MS32).